A 142-amino-acid polypeptide reads, in one-letter code: Transcriptional regulator MraZ (142 aa).

SpoVT-AbrB domains follow at residues 5–51 and 77–120; these read ASSL…PRPE and AMDV…DKAT.

This sequence belongs to the MraZ family. In terms of assembly, forms oligomers.

It localises to the cytoplasm. Its subcellular location is the nucleoid. This is Transcriptional regulator MraZ from Variovorax paradoxus (strain S110).